A 168-amino-acid polypeptide reads, in one-letter code: Scytalone dehydratase arp1 (168 aa).

Y29 and Y49 together coordinate substrate. Catalysis depends on residues H84 and H109. A substrate-binding site is contributed by N130.

The protein belongs to the scytalone dehydratase family. As to quaternary structure, homotrimer. Each subunit contains an active site, located in the central part of the hydrophobic core of the monomer, which functions independently.

The protein localises to the endosome. The enzyme catalyses scytalone = 1,3,8-trihydroxynaphthalene + H2O. The protein operates within pigment biosynthesis; melanin biosynthesis. Its activity is regulated as follows. Fenoxanil inhibits arp1 scytalone dehydratase activity. Its function is as follows. Scytalone dehydratase; part of the gene cluster that mediates the biosynthesis of dihydroxynaphthalene (DHN)-melanin, a bluish-green pigment and a structural component of the conidial wall. The first step of the pathway is the production of the heptaketide naphtopyrone YWA1 by the polyketide synthase alb1 though condensation of acetyl-CoA with malonyl-CoA. The naphtopyrone YWA1 is then converted to the pentaketide 1,3,6,8-tetrahydroxynaphthalene (1,3,6,8-THN) by the heptaketide hydrolyase ayg1 though chain-length shortening. 1,3,6,8-THN is substrate of the hydroxynaphthalene reductase arp2 to yield scytalone. The scytalone dehydratase arp1 then reduces scytalone to 1,3,8-THN. 1,3,8-THN is also substrate of the hydroxynaphthalene reductase arp2 to yield vermelone. Vermelone is further converted by the multicopper oxidase abr1 to 1,8-DHN. Finally the laccase abr2 transforms 1,8-DHN to DHN-melanin. DHN-melanin biosynthesis appears to be initiated in endosomes where early enzymes (abl1, ayg1, arp1 and arp2) localize, with exocytosis leading to melanin deposition on the cell surface where late enzymes (abr1 and abr2) localize. DHN-melanin is an important structural component of the outer cell wall and is required for the presence of conidial surface hydrophobins. DHN-melanin also plays a crucial role in fungal virulence, including a protective role against the host's immune defenses. DHN-melanin also protects conidia against amoeba predation. In Aspergillus fumigatus (strain ATCC MYA-4609 / CBS 101355 / FGSC A1100 / Af293) (Neosartorya fumigata), this protein is Scytalone dehydratase arp1.